The sequence spans 396 residues: Tryptophan synthase beta chain (396 aa).

K86 carries the post-translational modification N6-(pyridoxal phosphate)lysine.

This sequence belongs to the TrpB family. As to quaternary structure, tetramer of two alpha and two beta chains. Pyridoxal 5'-phosphate serves as cofactor.

The catalysed reaction is (1S,2R)-1-C-(indol-3-yl)glycerol 3-phosphate + L-serine = D-glyceraldehyde 3-phosphate + L-tryptophan + H2O. It participates in amino-acid biosynthesis; L-tryptophan biosynthesis; L-tryptophan from chorismate: step 5/5. Its function is as follows. The beta subunit is responsible for the synthesis of L-tryptophan from indole and L-serine. The protein is Tryptophan synthase beta chain of Yersinia pseudotuberculosis serotype O:1b (strain IP 31758).